We begin with the raw amino-acid sequence, 531 residues long: Protein SIS2 (531 aa).

Residues 1–20 show a composition bias toward basic and acidic residues; that stretch reads MPSDKDIKSPAQPKKEEEIP. Disordered stretches follow at residues 1–42, 88–127, 139–168, 180–261, and 461–531; these read MPSD…ANII, SPDS…KSPS, RPVR…EPSS, SLRA…DPRL, and YPED…TTNL. Residues 155 to 168 show a composition bias toward polar residues; it reads LTPITSPQHSEPSS. A compositionally biased stretch (low complexity) spans 183–198; it reads ATTNSISSAAASNQST. A compositionally biased stretch (gly residues) spans 204–213; sequence SGGGGGGGGA. Residues 214 to 249 show a composition bias toward low complexity; it reads NTATSSNSTTSNTALAAQGTTTTTTTTNSNSNTTTT. Composition is skewed to acidic residues over residues 462 to 472 and 481 to 514; these read PEDEDEDEADD and AIID…EEDP.

It belongs to the HFCD (homooligomeric flavin containing Cys decarboxylase) superfamily.

It localises to the nucleus. Its subcellular location is the cytoplasm. Functionally, may stimulate expression of certain genes that are periodically expressed during late G1. Also modulates the expression of the ENA1 ATPase. The polypeptide is Protein SIS2 (SIS2) (Candida tropicalis (Yeast)).